The sequence spans 466 residues: Neuronal acetylcholine receptor subunit non-alpha-3 (466 aa).

The first 28 residues, 1–28 (MKLQISGLLLVTAVAYATIEAPEEFVSL), serve as a signal peptide directing secretion. Topologically, residues 29 to 235 (AEMEDTLLRN…VTYSFILKRL (207 aa)) are extracellular. N-linked (GlcNAc...) asparagine glycans are attached at residues N54, N141, N169, and N208. A disulfide bridge links C156 with C170. 3 helical membrane passes run 236-260 (PLFY…VFYL), 268-285 (LLLS…LLVI), and 302-323 (YLLF…VINV). At 324 to 438 (HHRSSATYHP…WKFVAQVLDR (115 aa)) the chain is on the cytoplasmic side. The chain crosses the membrane as a helical span at residues 439-456 (IFLWVFLTASVLGTILIF).

This sequence belongs to the ligand-gated ion channel (TC 1.A.9) family. Acetylcholine receptor (TC 1.A.9.1) subfamily. As to quaternary structure, neuronal AChR seems to be composed of two different type of subunits: alpha and non-alpha (beta). Retina, tectum and brain.

Its subcellular location is the postsynaptic cell membrane. It localises to the cell membrane. After binding acetylcholine, the AChR responds by an extensive change in conformation that affects all subunits and leads to opening of an ion-conducting channel across the plasma membrane. The polypeptide is Neuronal acetylcholine receptor subunit non-alpha-3 (Carassius auratus (Goldfish)).